A 416-amino-acid chain; its full sequence is Formyl-CoA:oxalate CoA-transferase (416 aa).

CoA-binding positions include 17–18 (QS), R38, 72–75 (LNTK), 96–98 (NFH), H104, and 137–140 (KAYE). D169 functions as the Nucleophile in the catalytic mechanism. 248 to 250 (GGQ) lines the substrate pocket. A CoA-binding site is contributed by 273–275 (QEQ).

It belongs to the CoA-transferase III family. Frc subfamily. In terms of assembly, homodimer.

It carries out the reaction formyl-CoA + oxalate = oxalyl-CoA + formate. Its pathway is metabolic intermediate degradation; oxalate degradation; CO(2) and formate from oxalate: step 1/2. In terms of biological role, involved in the catabolism of oxalate and in the adapatation to low pH via the induction of the oxalate-dependent acid tolerance response (ATR). Catalyzes the transfer of the CoA moiety from formyl-CoA to oxalate. The chain is Formyl-CoA:oxalate CoA-transferase from Escherichia coli O17:K52:H18 (strain UMN026 / ExPEC).